The chain runs to 255 residues: Putative Myb family transcription factor At1g14600 (255 aa).

Residues 20–80 (RSPVPRLRWT…HLQMYRGSRI (61 aa)) enclose the HTH myb-type domain. The segment at residues 51 to 76 (PKLVLKIMDVKGLTISHVKSHLQMYR) is a DNA-binding region (H-T-H motif). The tract at residues 80–110 (ITLLGKPEESSSPSSRRRRRQDNEEDHLHDN) is disordered.

It localises to the nucleus. In terms of biological role, putative transcription factor. The chain is Putative Myb family transcription factor At1g14600 from Arabidopsis thaliana (Mouse-ear cress).